An 85-amino-acid polypeptide reads, in one-letter code: Small ribosomal subunit protein bS16 (85 aa).

Belongs to the bacterial ribosomal protein bS16 family.

The chain is Small ribosomal subunit protein bS16 from Metamycoplasma arthritidis (strain 158L3-1) (Mycoplasma arthritidis).